Consider the following 345-residue polypeptide: Homeobox-leucine zipper protein HOX16 (345 aa).

A DNA-binding region (homeobox) is located at residues 76-135 (LPEKKRRLTPEQVHLLERSFEEENKLEPERKTELARKLGLQPRQVAVWFQNRRARWKTKQ). The tract at residues 134-178 (KQLERDFDRLKASFDALRADHDALLQDNHRLHSQVMSLTEKLQEK) is leucine-zipper. A disordered region spans residues 220 to 241 (FEEQQEQQVKAEDRLSTGSGGS).

Belongs to the HD-ZIP homeobox family. Class I subfamily. In terms of tissue distribution, expressed in seedlings, stems, leaf sheaths and blades and panicles.

The protein resides in the nucleus. Its function is as follows. Probable transcription factor. This chain is Homeobox-leucine zipper protein HOX16 (HOX16), found in Oryza sativa subsp. indica (Rice).